The primary structure comprises 226 residues: 2-C-methyl-D-erythritol 4-phosphate cytidylyltransferase (226 aa).

This sequence belongs to the IspD/TarI cytidylyltransferase family. IspD subfamily.

The enzyme catalyses 2-C-methyl-D-erythritol 4-phosphate + CTP + H(+) = 4-CDP-2-C-methyl-D-erythritol + diphosphate. Its pathway is isoprenoid biosynthesis; isopentenyl diphosphate biosynthesis via DXP pathway; isopentenyl diphosphate from 1-deoxy-D-xylulose 5-phosphate: step 2/6. Its function is as follows. Catalyzes the formation of 4-diphosphocytidyl-2-C-methyl-D-erythritol from CTP and 2-C-methyl-D-erythritol 4-phosphate (MEP). The sequence is that of 2-C-methyl-D-erythritol 4-phosphate cytidylyltransferase from Parasynechococcus marenigrum (strain WH8102).